The following is a 194-amino-acid chain: Imidazoleglycerol-phosphate dehydratase (194 aa).

Belongs to the imidazoleglycerol-phosphate dehydratase family.

The protein resides in the cytoplasm. The enzyme catalyses D-erythro-1-(imidazol-4-yl)glycerol 3-phosphate = 3-(imidazol-4-yl)-2-oxopropyl phosphate + H2O. The protein operates within amino-acid biosynthesis; L-histidine biosynthesis; L-histidine from 5-phospho-alpha-D-ribose 1-diphosphate: step 6/9. The sequence is that of Imidazoleglycerol-phosphate dehydratase from Listeria monocytogenes serovar 1/2a (strain ATCC BAA-679 / EGD-e).